The chain runs to 305 residues: Oxygen-dependent coproporphyrinogen-III oxidase (305 aa).

Serine 98 is a substrate binding site. Positions 102 and 112 each coordinate a divalent metal cation. Catalysis depends on histidine 112, which acts as the Proton donor. Residue 114–116 (NVR) coordinates substrate. A divalent metal cation contacts are provided by histidine 151 and histidine 181. Positions 246 to 281 (YVEFNLVYDRGTLFGLQSGGRTESILMSMPPLARWE) are important for dimerization. 264 to 266 (GGR) provides a ligand contact to substrate.

It belongs to the aerobic coproporphyrinogen-III oxidase family. Homodimer. A divalent metal cation is required as a cofactor.

The protein localises to the cytoplasm. The catalysed reaction is coproporphyrinogen III + O2 + 2 H(+) = protoporphyrinogen IX + 2 CO2 + 2 H2O. It functions in the pathway porphyrin-containing compound metabolism; protoporphyrin-IX biosynthesis; protoporphyrinogen-IX from coproporphyrinogen-III (O2 route): step 1/1. Its function is as follows. Involved in the heme biosynthesis. Catalyzes the aerobic oxidative decarboxylation of propionate groups of rings A and B of coproporphyrinogen-III to yield the vinyl groups in protoporphyrinogen-IX. This chain is Oxygen-dependent coproporphyrinogen-III oxidase, found in Vibrio vulnificus (strain YJ016).